A 580-amino-acid polypeptide reads, in one-letter code: Netrin-3 (580 aa).

The signal sequence occupies residues 1–27; the sequence is MPGWPWGLLLTAGTLFAALSPGPPAPA. Positions 36 to 254 constitute a Laminin N-terminal domain; sequence APRGCVPGLV…AATDLQVGGR (219 aa). The disordered stretch occupies residues 62–83; it reads PATRACDASDPRRAHSPALLTS. 15 disulfides stabilise this stretch: cysteine 92–cysteine 125, cysteine 255–cysteine 264, cysteine 257–cysteine 274, cysteine 276–cysteine 285, cysteine 288–cysteine 308, cysteine 311–cysteine 320, cysteine 313–cysteine 338, cysteine 341–cysteine 350, cysteine 353–cysteine 371, cysteine 374–cysteine 386, cysteine 376–cysteine 393, cysteine 395–cysteine 404, cysteine 407–cysteine 421, cysteine 441–cysteine 514, and cysteine 460–cysteine 577. Asparagine 104 carries N-linked (GlcNAc...) asparagine glycosylation. 3 consecutive Laminin EGF-like domains span residues 255-308, 311-371, and 374-421; these read CKCN…SHAC, CSCN…RRAC, and CDCH…VAPC. Asparagine 387 is a glycosylation site (N-linked (GlcNAc...) asparagine). One can recognise an NTR domain in the interval 441-577; that stretch reads CDSHCKPARG…LQRRERRGRC (137 aa). The Cell attachment site; atypical signature appears at 500-502; the sequence is RGS.

As to expression, spinal cord.

It is found in the secreted. Its subcellular location is the extracellular space. It localises to the extracellular matrix. Its function is as follows. Netrins control guidance of CNS commissural axons and peripheral motor axons. This Homo sapiens (Human) protein is Netrin-3 (NTN3).